The primary structure comprises 244 residues: tRNA (guanine-N(1)-)-methyltransferase (244 aa).

Residues Gly113 and 133–138 each bind S-adenosyl-L-methionine; that span reads IGDYVL.

This sequence belongs to the RNA methyltransferase TrmD family. Homodimer.

The protein localises to the cytoplasm. The catalysed reaction is guanosine(37) in tRNA + S-adenosyl-L-methionine = N(1)-methylguanosine(37) in tRNA + S-adenosyl-L-homocysteine + H(+). Its function is as follows. Specifically methylates guanosine-37 in various tRNAs. In Bacillus cereus (strain G9842), this protein is tRNA (guanine-N(1)-)-methyltransferase.